The sequence spans 204 residues: Putative AgrB-like protein (204 aa).

The next 4 membrane-spanning stretches (helical) occupy residues 52 to 74, 87 to 107, 111 to 131, and 156 to 176; these read YGIA…YLWL, LNCT…FQNI, NWIV…FAPA, and LILT…LIMV.

This sequence belongs to the AgrB family.

Its subcellular location is the cell membrane. Functionally, may be involved in the proteolytic processing of a quorum sensing system signal molecule precursor. This is Putative AgrB-like protein from Listeria monocytogenes serotype 4b (strain CLIP80459).